The chain runs to 154 residues: Transcriptional repressor NrdR (154 aa).

The segment at 1-22 is disordered; the sequence is MRCPFCGNDDTQVKDSRPTEDN. The segment at 3–34 is a zinc-finger region; sequence CPFCGNDDTQVKDSRPTEDNSAIRRRRFCPAC. The segment covering 11-22 has biased composition (basic and acidic residues); it reads TQVKDSRPTEDN. In terms of domain architecture, ATP-cone spans 49-139; it reads LTVVKSGGSR…VYKDFREVTD (91 aa).

The protein belongs to the NrdR family. Zn(2+) is required as a cofactor.

Its function is as follows. Negatively regulates transcription of bacterial ribonucleotide reductase nrd genes and operons by binding to NrdR-boxes. The chain is Transcriptional repressor NrdR from Rhodospirillum centenum (strain ATCC 51521 / SW).